The following is a 701-amino-acid chain: Glycine--tRNA ligase beta subunit (701 aa).

The protein belongs to the class-II aminoacyl-tRNA synthetase family. Tetramer of two alpha and two beta subunits.

It localises to the cytoplasm. It catalyses the reaction tRNA(Gly) + glycine + ATP = glycyl-tRNA(Gly) + AMP + diphosphate. The chain is Glycine--tRNA ligase beta subunit from Anaeromyxobacter sp. (strain K).